A 351-amino-acid polypeptide reads, in one-letter code: DNA polymerase IV (351 aa).

A UmuC domain is found at 4–185 (IIHVDMDCFF…LPLGKIPGVG (182 aa)). Positions 8 and 103 each coordinate Mg(2+). Glu104 is a catalytic residue.

This sequence belongs to the DNA polymerase type-Y family. As to quaternary structure, monomer. Mg(2+) serves as cofactor.

It is found in the cytoplasm. It catalyses the reaction DNA(n) + a 2'-deoxyribonucleoside 5'-triphosphate = DNA(n+1) + diphosphate. Its function is as follows. Poorly processive, error-prone DNA polymerase involved in untargeted mutagenesis. Copies undamaged DNA at stalled replication forks, which arise in vivo from mismatched or misaligned primer ends. These misaligned primers can be extended by PolIV. Exhibits no 3'-5' exonuclease (proofreading) activity. May be involved in translesional synthesis, in conjunction with the beta clamp from PolIII. This Cronobacter sakazakii (strain ATCC BAA-894) (Enterobacter sakazakii) protein is DNA polymerase IV.